The primary structure comprises 469 residues: ATP-dependent protease ATPase subunit HslU (469 aa).

Residues Ile-24, 66 to 71 (GVGKTE), Asp-282, Glu-347, and Arg-419 each bind ATP.

It belongs to the ClpX chaperone family. HslU subfamily. In terms of assembly, a double ring-shaped homohexamer of HslV is capped on each side by a ring-shaped HslU homohexamer. The assembly of the HslU/HslV complex is dependent on binding of ATP.

The protein resides in the cytoplasm. Functionally, ATPase subunit of a proteasome-like degradation complex; this subunit has chaperone activity. The binding of ATP and its subsequent hydrolysis by HslU are essential for unfolding of protein substrates subsequently hydrolyzed by HslV. HslU recognizes the N-terminal part of its protein substrates and unfolds these before they are guided to HslV for hydrolysis. In Listeria monocytogenes serotype 4b (strain CLIP80459), this protein is ATP-dependent protease ATPase subunit HslU.